The following is a 138-amino-acid chain: Ribulose bisphosphate carboxylase small subunit (138 aa).

The protein belongs to the RuBisCO small chain family. In terms of assembly, heterohexadecamer of 8 large and 8 small subunits.

It is found in the plastid. The protein resides in the chloroplast. Its function is as follows. RuBisCO catalyzes two reactions: the carboxylation of D-ribulose 1,5-bisphosphate, the primary event in carbon dioxide fixation, as well as the oxidative fragmentation of the pentose substrate in the photorespiration process. Both reactions occur simultaneously and in competition at the same active site. Although the small subunit is not catalytic it is essential for maximal activity. The sequence is that of Ribulose bisphosphate carboxylase small subunit from Pyropia dentata (Red alga).